The chain runs to 388 residues: Calreticulin (388 aa).

The signal sequence occupies residues 1 to 17 (MQLSLLVGLVCFSAINA). Residues C103 and C135 are joined by a disulfide bond. Y107, K109, Y126, and D133 together coordinate an alpha-D-glucoside. 7 tandem repeats follow at residues 189–200 (AESGELEADWDF), 208–219 (DPDAKKPEDWDE), 225–236 (DEDDKKPEDWDK), 242–253 (DPDAKKPEDWDD), 257–267 (GEWEPPMVDNP), 271–281 (GEWKPKQKKNP), and 285–295 (GKWIHPEIEIP). Positions 189-253 (AESGELEADW…DAKKPEDWDD (65 aa)) are 4 X approximate repeats. The segment at 193–282 (ELEADWDFLP…WKPKQKKNPA (90 aa)) is disordered. Residues 205–215 (KIKDPDAKKPE) are compositionally biased toward basic and acidic residues. A compositionally biased stretch (acidic residues) spans 216 to 227 (DWDEREFIDDED). A compositionally biased stretch (basic and acidic residues) spans 228 to 249 (DKKPEDWDKPEHIPDPDAKKPE). Residues 250 to 259 (DWDDEMDGEW) show a composition bias toward acidic residues. The tract at residues 257–295 (GEWEPPMVDNPEYKGEWKPKQKKNPAYKGKWIHPEIEIP) is 3 X approximate repeats. Position 315 (D315) interacts with an alpha-D-glucoside. The interval 349-388 (REGEKKKGKKTKKQKKKEKNEKIKKEKMKKRKRANRKKKK) is disordered. Composition is skewed to basic residues over residues 354-365 (KKGKKTKKQKKK) and 373-388 (KEKM…KKKK).

It belongs to the calreticulin family.

The protein resides in the endoplasmic reticulum lumen. In terms of biological role, molecular calcium-binding chaperone promoting folding, oligomeric assembly and quality control in the ER via the calreticulin/calnexin cycle. This lectin may interact transiently with almost all of the monoglucosylated glycoproteins that are synthesized in the ER. In Onchocerca volvulus, this protein is Calreticulin (crt-1).